The chain runs to 137 residues: Nucleoside diphosphate kinase (137 aa).

Lys-10, Phe-58, Arg-86, Thr-92, Arg-103, and Asn-113 together coordinate ATP. Catalysis depends on His-116, which acts as the Pros-phosphohistidine intermediate.

It belongs to the NDK family. In terms of assembly, homotetramer. The cofactor is Mg(2+).

It is found in the cytoplasm. It catalyses the reaction a 2'-deoxyribonucleoside 5'-diphosphate + ATP = a 2'-deoxyribonucleoside 5'-triphosphate + ADP. It carries out the reaction a ribonucleoside 5'-diphosphate + ATP = a ribonucleoside 5'-triphosphate + ADP. Its function is as follows. Major role in the synthesis of nucleoside triphosphates other than ATP. The ATP gamma phosphate is transferred to the NDP beta phosphate via a ping-pong mechanism, using a phosphorylated active-site intermediate. This chain is Nucleoside diphosphate kinase, found in Helicobacter pylori (strain Shi470).